Here is a 424-residue protein sequence, read N- to C-terminus: Glutamyl-tRNA reductase (424 aa).

Substrate contacts are provided by residues 49–52, serine 107, 112–114, and glutamine 118; these read TCNR and EPQ. The active-site Nucleophile is cysteine 50. 187 to 192 contacts NADP(+); that stretch reads GAGETI.

It belongs to the glutamyl-tRNA reductase family. As to quaternary structure, homodimer.

The enzyme catalyses (S)-4-amino-5-oxopentanoate + tRNA(Glu) + NADP(+) = L-glutamyl-tRNA(Glu) + NADPH + H(+). The protein operates within porphyrin-containing compound metabolism; protoporphyrin-IX biosynthesis; 5-aminolevulinate from L-glutamyl-tRNA(Glu): step 1/2. In terms of biological role, catalyzes the NADPH-dependent reduction of glutamyl-tRNA(Glu) to glutamate 1-semialdehyde (GSA). The sequence is that of Glutamyl-tRNA reductase from Chromohalobacter salexigens (strain ATCC BAA-138 / DSM 3043 / CIP 106854 / NCIMB 13768 / 1H11).